The following is a 365-amino-acid chain: UDP-N-acetylglucosamine--N-acetylmuramyl-(pentapeptide) pyrophosphoryl-undecaprenol N-acetylglucosamine transferase (365 aa).

UDP-N-acetyl-alpha-D-glucosamine is bound by residues 17-19 (TGG), asparagine 129, arginine 167, serine 194, isoleucine 250, 269-274 (ALTVSE), and glutamine 295.

The protein belongs to the glycosyltransferase 28 family. MurG subfamily.

The protein resides in the cell inner membrane. The catalysed reaction is di-trans,octa-cis-undecaprenyl diphospho-N-acetyl-alpha-D-muramoyl-L-alanyl-D-glutamyl-meso-2,6-diaminopimeloyl-D-alanyl-D-alanine + UDP-N-acetyl-alpha-D-glucosamine = di-trans,octa-cis-undecaprenyl diphospho-[N-acetyl-alpha-D-glucosaminyl-(1-&gt;4)]-N-acetyl-alpha-D-muramoyl-L-alanyl-D-glutamyl-meso-2,6-diaminopimeloyl-D-alanyl-D-alanine + UDP + H(+). Its pathway is cell wall biogenesis; peptidoglycan biosynthesis. Cell wall formation. Catalyzes the transfer of a GlcNAc subunit on undecaprenyl-pyrophosphoryl-MurNAc-pentapeptide (lipid intermediate I) to form undecaprenyl-pyrophosphoryl-MurNAc-(pentapeptide)GlcNAc (lipid intermediate II). In Shewanella pealeana (strain ATCC 700345 / ANG-SQ1), this protein is UDP-N-acetylglucosamine--N-acetylmuramyl-(pentapeptide) pyrophosphoryl-undecaprenol N-acetylglucosamine transferase.